The following is a 260-amino-acid chain: MICOS complex subunit mic25-a (260 aa).

The tract at residues 1–92 (MGGSESTGRK…KPTARGVGHQ (92 aa)) is disordered. G2 carries N-myristoyl glycine lipidation. Positions 28-39 (RLSDEVVNRMKD) are enriched in basic and acidic residues. Residues 48-64 (STSTASGTTSGPTTFPS) are compositionally biased toward low complexity. The stretch at 94–187 (AEEDLYRRYE…LNSIEKKNLE (94 aa)) forms a coiled coil. The CHCH domain maps to 213-255 (DPVCMDLQSNILKCYAENKQERLNCSDLAKEYGKCVSAAQKNL). Short sequence motifs (cx9C motif) lie at residues 216 to 226 (CMDLQSNILKC) and 237 to 247 (CSDLAKEYGKC). 2 cysteine pairs are disulfide-bonded: C216–C247 and C226–C237.

Belongs to the MICOS complex subunit Mic19 family. Metazoan Mic25 subfamily. As to quaternary structure, component of the mitochondrial contact site and cristae organizing system (MICOS) complex (also known as MINOS or MitOS complex).

Its subcellular location is the mitochondrion inner membrane. Component of the MICOS complex, a large protein complex of the mitochondrial inner membrane that plays crucial roles in the maintenance of crista junctions, inner membrane architecture, and formation of contact sites to the outer membrane. This chain is MICOS complex subunit mic25-a (chchd6-a), found in Xenopus laevis (African clawed frog).